Consider the following 94-residue polypeptide: Ribonuclease VapC3 (94 aa).

Mg(2+) is bound at residue Asp6.

It belongs to the PINc/VapC protein family. Requires Mg(2+) as cofactor.

Functionally, toxic component of a type II toxin-antitoxin (TA) system. An RNase. Its cognate antitoxin is VapB3. This chain is Ribonuclease VapC3 (vapC3), found in Methanocaldococcus jannaschii (strain ATCC 43067 / DSM 2661 / JAL-1 / JCM 10045 / NBRC 100440) (Methanococcus jannaschii).